A 156-amino-acid chain; its full sequence is Putative pre-16S rRNA nuclease (156 aa).

This sequence belongs to the YqgF nuclease family.

It is found in the cytoplasm. Functionally, could be a nuclease involved in processing of the 5'-end of pre-16S rRNA. This Rickettsia typhi (strain ATCC VR-144 / Wilmington) protein is Putative pre-16S rRNA nuclease.